The primary structure comprises 327 residues: Glutaminase 1 (327 aa).

Substrate is bound by residues Ser-74, Asn-126, Glu-170, Asn-177, Tyr-201, Tyr-253, and Val-271.

It belongs to the glutaminase family. Homotetramer.

It catalyses the reaction L-glutamine + H2O = L-glutamate + NH4(+). This chain is Glutaminase 1 (glsA1), found in Bacillus subtilis (strain 168).